The following is a 152-amino-acid chain: MKKMIGSPGTMSGLILRLGQCATAAASIGVMVSSYDFSNYTAFCFLVASMGLQLIWSFGLACLDVYAIRRKSDLRSPILLSLFTVGDWVTALLALAAACSSAGVTVLFTKDTEFCRQQPALSCDRFQISVGLSFFNWFLAAISSHTMFWILI.

Residues 1-11 (MKKMIGSPGTM) lie on the Cytoplasmic side of the membrane. Residues 12–32 (SGLILRLGQCATAAASIGVMV) traverse the membrane as a helical segment. At 33 to 42 (SSYDFSNYTA) the chain is on the extracellular side. An N-linked (GlcNAc...) asparagine glycan is attached at Asn-39. A helical membrane pass occupies residues 43–63 (FCFLVASMGLQLIWSFGLACL). The Cytoplasmic segment spans residues 64–77 (DVYAIRRKSDLRSP). Residues 78-98 (ILLSLFTVGDWVTALLALAAA) traverse the membrane as a helical segment. At 99 to 131 (CSSAGVTVLFTKDTEFCRQQPALSCDRFQISVG) the chain is on the extracellular side. Residues 132-152 (LSFFNWFLAAISSHTMFWILI) form a helical membrane-spanning segment.

Belongs to the Casparian strip membrane proteins (CASP) family. As to quaternary structure, homodimer and heterodimers. In terms of tissue distribution, expressed in leaves, exclusively in hair cells (e.g. differentiated trichomes and immature cells).

It is found in the cell membrane. The sequence is that of CASP-like protein 5B1 from Arabidopsis thaliana (Mouse-ear cress).